The following is a 291-amino-acid chain: Small ribosomal subunit protein uS2 (291 aa).

The segment at 235-291 is disordered; it reads NLQEDEESGDSGVDPYQDREEEITDYSNYTPKDEASGDDEDEEDNSLVNDEDLYDDK. Residues 270–291 show a composition bias toward acidic residues; sequence SGDDEDEEDNSLVNDEDLYDDK.

The protein belongs to the universal ribosomal protein uS2 family.

The polypeptide is Small ribosomal subunit protein uS2 (Treponema denticola (strain ATCC 35405 / DSM 14222 / CIP 103919 / JCM 8153 / KCTC 15104)).